We begin with the raw amino-acid sequence, 235 residues long: 15,16-dihydrobiliverdin:ferredoxin oxidoreductase (235 aa).

The protein belongs to the HY2 family.

It carries out the reaction 15,16-dihydrobiliverdin + oxidized 2[4Fe-4S]-[ferredoxin] = biliverdin IXalpha + reduced 2[4Fe-4S]-[ferredoxin] + 2 H(+). Its function is as follows. Catalyzes the two-electron reduction of biliverdin IX-alpha at the C15 methine bridge. The polypeptide is 15,16-dihydrobiliverdin:ferredoxin oxidoreductase (Synechococcus sp. (strain CC9605)).